Consider the following 569-residue polypeptide: Aspartokinase 1, chloroplastic (569 aa).

A chloroplast-targeting transit peptide spans 1–90; that stretch reads MAATRVRCCH…VDEKGITCVM (90 aa). ATP-binding residues include Lys91, Gly94, and Ser123. Glu207 is a substrate binding site. ACT domains are found at residues 405-483 and 484-560; these read IAST…AIIS and LIGN…GNGS. L-lysine-binding residues include Gln413 and Gly415. Ser430 lines the S-adenosyl-L-methionine pocket. L-lysine contacts are provided by Val431, Asp432, and Ser437. Residues Ser452 and Arg453 each contribute to the S-adenosyl-L-methionine site.

This sequence belongs to the aspartokinase family. As to quaternary structure, homodimer.

It is found in the plastid. Its subcellular location is the chloroplast. The catalysed reaction is L-aspartate + ATP = 4-phospho-L-aspartate + ADP. It functions in the pathway amino-acid biosynthesis; L-lysine biosynthesis via DAP pathway; (S)-tetrahydrodipicolinate from L-aspartate: step 1/4. It participates in amino-acid biosynthesis; L-methionine biosynthesis via de novo pathway; L-homoserine from L-aspartate: step 1/3. Its pathway is amino-acid biosynthesis; L-threonine biosynthesis; L-threonine from L-aspartate: step 1/5. Its activity is regulated as follows. Inhibited by S-adenosyl-L-methionine (SAM) and lysine in a synergistic manner. No inhibition by threonine, leucine or SAM alone, and no activation or inhibition by alanine, cysteine, isoleucine, serine, valine, methionine, glutamine, asparagine, glutamic acid or arginine. Involved in the first step of essential amino acids lysine, threonine, methionine and isoleucine synthesis via the aspartate-family pathway. The chain is Aspartokinase 1, chloroplastic (AK1) from Arabidopsis thaliana (Mouse-ear cress).